The primary structure comprises 528 residues: DnaJ homolog 1, mitochondrial (528 aa).

A mitochondrion-targeting transit peptide spans 1 to 66; it reads MFSKYLQSRV…REFSRCAALK (66 aa). In terms of domain architecture, J spans 86–150; that stretch reads DPYKTLGVSK…KKKKAFDTYG (65 aa). A CR-type zinc finger spans residues 227–308; sequence GAKKDLSYSV…CMGSGTVRER (82 aa). CXXCXGXG motif repeat units follow at residues 240 to 247, 257 to 264, 280 to 287, and 296 to 303; these read CSSCHGSG, CFACKGTG, CDSCGGTG, and CRSCMGSG. A disordered region spans residues 455–528; sequence NDSTARRTQS…QNPKKDESSS (74 aa). Residues 462 to 488 are compositionally biased toward low complexity; that stretch reads TQSSPSGTNSSTSTSSTSSKHSTGIST. The span at 513–528 shows a compositional bias: basic and acidic residues; it reads LHPDEDQNPKKDESSS.

It is found in the mitochondrion. The sequence is that of DnaJ homolog 1, mitochondrial (mdj1) from Schizosaccharomyces pombe (strain 972 / ATCC 24843) (Fission yeast).